Reading from the N-terminus, the 61-residue chain is Small ribosomal subunit protein uS14 (61 aa).

4 residues coordinate Zn(2+): Cys24, Cys27, Cys40, and Cys43.

Belongs to the universal ribosomal protein uS14 family. Zinc-binding uS14 subfamily. In terms of assembly, part of the 30S ribosomal subunit. Contacts proteins S3 and S10. The cofactor is Zn(2+).

Binds 16S rRNA, required for the assembly of 30S particles and may also be responsible for determining the conformation of the 16S rRNA at the A site. This chain is Small ribosomal subunit protein uS14, found in Alkaliphilus oremlandii (strain OhILAs) (Clostridium oremlandii (strain OhILAs)).